Consider the following 389-residue polypeptide: Sterol methyltransferase-like 2 (389 aa).

The helical transmembrane segment at 25 to 45 (LSWKGAVGLVAATGIGYVLII) threads the bilayer.

This sequence belongs to the class I-like SAM-binding methyltransferase superfamily. Erg6/SMT family.

Its subcellular location is the microsome membrane. In terms of biological role, unable to convert squalene, botryococcene, cycloartenol, zymosterol or lanosterol to mono-, di-, tri- or tetramethylated derivatives. The polypeptide is Sterol methyltransferase-like 2 (SMT-2) (Botryococcus braunii (Green alga)).